Consider the following 148-residue polypeptide: Methylglyoxal synthase (148 aa).

Residues 4 to 148 (VSVPAIKRIV…LSYNTKVKKD (145 aa)) enclose the MGS-like domain. Residues H17, K21, 43 to 46 (TGTT), and 63 to 64 (SG) each bind substrate. Catalysis depends on D69, which acts as the Proton donor/acceptor. H96 contacts substrate.

Belongs to the methylglyoxal synthase family.

The enzyme catalyses dihydroxyacetone phosphate = methylglyoxal + phosphate. In terms of biological role, catalyzes the formation of methylglyoxal from dihydroxyacetone phosphate. This is Methylglyoxal synthase from Leptospira interrogans serogroup Icterohaemorrhagiae serovar copenhageni (strain Fiocruz L1-130).